The primary structure comprises 95 residues: Small ribosomal subunit protein bS6 (95 aa).

Belongs to the bacterial ribosomal protein bS6 family.

Functionally, binds together with bS18 to 16S ribosomal RNA. The sequence is that of Small ribosomal subunit protein bS6 from Exiguobacterium sp. (strain ATCC BAA-1283 / AT1b).